A 977-amino-acid chain; its full sequence is Macrophage colony-stimulating factor 1 receptor (977 aa).

The first 19 residues, methionine 1 to glycine 19, serve as a signal peptide directing secretion. The Extracellular segment spans residues alanine 20–proline 515. Ig-like C2-type domains are found at residues glutamate 24–proline 104, serine 107–arginine 197, glutamine 204–serine 298, alanine 299–arginine 397, and tyrosine 398–glutamine 503. 3 cysteine pairs are disulfide-bonded: cysteine 42–cysteine 84, cysteine 127–cysteine 177, and cysteine 224–cysteine 278. Residues asparagine 45 and asparagine 73 are each glycosylated (N-linked (GlcNAc...) asparagine). N-linked (GlcNAc...) asparagine glycans are attached at residues asparagine 302, asparagine 335, asparagine 389, asparagine 410, asparagine 449, asparagine 478, and asparagine 491. A disulfide bond links cysteine 417 and cysteine 483. The chain crosses the membrane as a helical span at residues valine 516–tyrosine 536. Residues lysine 537–cysteine 977 lie on the Cytoplasmic side of the membrane. Residues glutamine 540–lysine 572 are regulatory juxtamembrane domain. Phosphotyrosine; by autocatalysis is present on residues tyrosine 544 and tyrosine 559. Residues leucine 580–arginine 913 enclose the Protein kinase domain. Residues leucine 586–valine 594 and lysine 614 each bind ATP. Phosphotyrosine; by autocatalysis is present on residues tyrosine 697 and tyrosine 706. Serine 711 carries the post-translational modification Phosphoserine. Tyrosine 721 bears the Phosphotyrosine; by autocatalysis mark. Catalysis depends on aspartate 776, which acts as the Proton acceptor. The interval aspartate 794–proline 816 is activation loop. Tyrosine 807 and tyrosine 921 each carry phosphotyrosine; by autocatalysis. The interval tyrosine 921–alanine 957 is disordered. Residues glycine 929 to glycine 941 show a composition bias toward gly residues. Tyrosine 974 bears the Phosphotyrosine; by autocatalysis mark.

It belongs to the protein kinase superfamily. Tyr protein kinase family. CSF-1/PDGF receptor subfamily. Monomer. Homodimer. Interacts with CSF1 and IL34. Interaction with dimeric CSF1 or IL34 leads to receptor homodimerization. Interacts with INPPL1/SHIP2 and THOC5. Interacts (tyrosine phosphorylated) with PLCG2 (via SH2 domain). Interacts (tyrosine phosphorylated) with PIK3R1 (via SH2 domain). Interacts (tyrosine phosphorylated) with FYN, YES1 and SRC (via SH2 domain). Interacts (tyrosine phosphorylated) with CBL, GRB2 and SLA2. Post-translationally, autophosphorylated in response to CSF1 or IL34 binding. Phosphorylation at Tyr-559 is important for normal down-regulation of signaling by ubiquitination, internalization and degradation. Phosphorylation at Tyr-559 and Tyr-807 is important for interaction with SRC family members, including FYN, YES1 and SRC, and for subsequent activation of these protein kinases. Phosphorylation at Tyr-697 and Tyr-921 is important for interaction with GRB2. Phosphorylation at Tyr-721 is important for interaction with PIK3R1. Phosphorylation at Tyr-721 and Tyr-807 is important for interaction with PLCG2. Phosphorylation at Tyr-974 is important for interaction with CBL. Dephosphorylation by PTPN2 negatively regulates downstream signaling and macrophage differentiation. In terms of processing, ubiquitinated. Becomes rapidly polyubiquitinated after autophosphorylation, leading to its degradation. As to expression, widely expressed.

The protein localises to the cell membrane. The enzyme catalyses L-tyrosyl-[protein] + ATP = O-phospho-L-tyrosyl-[protein] + ADP + H(+). With respect to regulation, present in an inactive conformation in the absence of bound ligand. CSF1 or IL34 binding leads to dimerization and activation by autophosphorylation on tyrosine residues. Inhibited by imatinib/STI-571 (Gleevec), dasatinib, sunitinib/SU11248, lestaurtinib/CEP-701, midostaurin/PKC-412, Ki20227, linifanib/ABT-869, Axitinib/AG013736, sorafenib/BAY 43-9006 and GW2580. Functionally, tyrosine-protein kinase that acts as a cell-surface receptor for CSF1 and IL34 and plays an essential role in the regulation of survival, proliferation and differentiation of hematopoietic precursor cells, especially mononuclear phagocytes, such as macrophages and monocytes. Promotes the release of pro-inflammatory chemokines in response to IL34 and CSF1, and thereby plays an important role in innate immunity and in inflammatory processes. Plays an important role in the regulation of osteoclast proliferation and differentiation, the regulation of bone resorption, and is required for normal bone and tooth development. Required for normal male and female fertility, and for normal development of milk ducts and acinar structures in the mammary gland during pregnancy. Promotes reorganization of the actin cytoskeleton, regulates formation of membrane ruffles, cell adhesion and cell migration, and promotes cancer cell invasion. Activates several signaling pathways in response to ligand binding, including the ERK1/2 and the JNK pathway. Phosphorylates PIK3R1, PLCG2, GRB2, SLA2 and CBL. Activation of PLCG2 leads to the production of the cellular signaling molecules diacylglycerol and inositol 1,4,5-trisphosphate, that then lead to the activation of protein kinase C family members, especially PRKCD. Phosphorylation of PIK3R1, the regulatory subunit of phosphatidylinositol 3-kinase, leads to activation of the AKT1 signaling pathway. Activated CSF1R also mediates activation of the MAP kinases MAPK1/ERK2 and/or MAPK3/ERK1, and of the SRC family kinases SRC, FYN and YES1. Activated CSF1R transmits signals both via proteins that directly interact with phosphorylated tyrosine residues in its intracellular domain, or via adapter proteins, such as GRB2. Promotes activation of STAT family members STAT3, STAT5A and/or STAT5B. Promotes tyrosine phosphorylation of SHC1 and INPP5D/SHIP-1. Receptor signaling is down-regulated by protein phosphatases, such as INPP5D/SHIP-1, that dephosphorylate the receptor and its downstream effectors, and by rapid internalization of the activated receptor. In the central nervous system, may play a role in the development of microglia macrophages. This is Macrophage colony-stimulating factor 1 receptor (Csf1r) from Mus musculus (Mouse).